A 377-amino-acid chain; its full sequence is Succinyl-diaminopimelate desuccinylase (377 aa).

Histidine 68 provides a ligand contact to Zn(2+). The active site involves aspartate 70. A Zn(2+)-binding site is contributed by aspartate 101. The Proton acceptor role is filled by glutamate 135. Residues glutamate 136, glutamate 164, and histidine 350 each contribute to the Zn(2+) site.

It belongs to the peptidase M20A family. DapE subfamily. As to quaternary structure, homodimer. Zn(2+) is required as a cofactor. The cofactor is Co(2+).

The enzyme catalyses N-succinyl-(2S,6S)-2,6-diaminopimelate + H2O = (2S,6S)-2,6-diaminopimelate + succinate. Its pathway is amino-acid biosynthesis; L-lysine biosynthesis via DAP pathway; LL-2,6-diaminopimelate from (S)-tetrahydrodipicolinate (succinylase route): step 3/3. In terms of biological role, catalyzes the hydrolysis of N-succinyl-L,L-diaminopimelic acid (SDAP), forming succinate and LL-2,6-diaminopimelate (DAP), an intermediate involved in the bacterial biosynthesis of lysine and meso-diaminopimelic acid, an essential component of bacterial cell walls. The polypeptide is Succinyl-diaminopimelate desuccinylase (Acinetobacter baumannii (strain AB307-0294)).